Reading from the N-terminus, the 1119-residue chain is DNA-directed RNA polymerase subunit beta (1119 aa).

The protein belongs to the RNA polymerase beta chain family. As to quaternary structure, the RNAP catalytic core consists of 2 alpha, 1 beta, 1 beta' and 1 omega subunit. When a sigma factor is associated with the core the holoenzyme is formed, which can initiate transcription.

The catalysed reaction is RNA(n) + a ribonucleoside 5'-triphosphate = RNA(n+1) + diphosphate. Functionally, DNA-dependent RNA polymerase catalyzes the transcription of DNA into RNA using the four ribonucleoside triphosphates as substrates. This is DNA-directed RNA polymerase subunit beta from Thermus thermophilus (strain ATCC BAA-163 / DSM 7039 / HB27).